A 362-amino-acid polypeptide reads, in one-letter code: S-adenosylmethionine decarboxylase proenzyme 2 (362 aa).

Residues glutamate 9 and glutamate 12 contribute to the active site. Glutamate 68 contributes to the substrate binding site. Serine 69 acts as the Schiff-base intermediate with substrate; via pyruvic acid in catalysis. Serine 69 carries the pyruvic acid (Ser); by autocatalysis modification. Residue cysteine 83 is the Proton donor; for catalytic activity of the active site. Catalysis depends on proton acceptor; for processing activity residues serine 232 and histidine 245. Substrate is bound at residue glutamate 249.

Belongs to the eukaryotic AdoMetDC family. It depends on pyruvate as a cofactor. Is synthesized initially as an inactive proenzyme. Formation of the active enzyme involves a self-maturation process in which the active site pyruvoyl group is generated from an internal serine residue via an autocatalytic post-translational modification. Two non-identical subunits are generated from the proenzyme in this reaction, and the pyruvate is formed at the N-terminus of the alpha chain, which is derived from the carboxyl end of the proenzyme. The post-translation cleavage follows an unusual pathway, termed non-hydrolytic serinolysis, in which the side chain hydroxyl group of the serine supplies its oxygen atom to form the C-terminus of the beta chain, while the remainder of the serine residue undergoes an oxidative deamination to produce ammonia and the pyruvoyl group blocking the N-terminus of the alpha chain.

The enzyme catalyses S-adenosyl-L-methionine + H(+) = S-adenosyl 3-(methylsulfanyl)propylamine + CO2. It functions in the pathway amine and polyamine biosynthesis; S-adenosylmethioninamine biosynthesis; S-adenosylmethioninamine from S-adenosyl-L-methionine: step 1/1. Essential for biosynthesis of the polyamines spermidine and spermine. Essential for polyamine homeostasis, and normal plant embryogenesis, growth and development. The polypeptide is S-adenosylmethionine decarboxylase proenzyme 2 (Arabidopsis thaliana (Mouse-ear cress)).